Consider the following 349-residue polypeptide: D-arabinose 1-dehydrogenase (NADP(+)) (349 aa).

Zn(2+) contacts are provided by C46, H70, D99, C102, C105, C113, and D155.

The protein belongs to the zinc-containing alcohol dehydrogenase family. Homotetramer. Dimer of dimers. It depends on Zn(2+) as a cofactor.

The enzyme catalyses D-arabinose + NADP(+) = D-arabinono-1,4-lactone + NADPH + H(+). Its function is as follows. Participates in a pentose oxidation pathway that converts D-arabinose to 2-oxoglutarate. Catalyzes the NADP-dependent conversion of D-arabinose to D-arabinono-1,4-lactone. In vitro, can also use L-fucose, L-galactose and D-ribose. Shows highest activity with L-fucose, in combinaison with NAD, and lower activity toward L-galactose and D-ribose. When acting on its physiological substrate, D-arabinose, shows a clear preference for NADP over NAD. The sequence is that of D-arabinose 1-dehydrogenase (NADP(+)) from Saccharolobus solfataricus (strain ATCC 35092 / DSM 1617 / JCM 11322 / P2) (Sulfolobus solfataricus).